Consider the following 203-residue polypeptide: MTNASDDFTESSQPFKLFADWLTDAKASEPNDPNAVALATVDPDGLPNVRMVLLKDFDEQGFVFYTNYESTKGKEILSAEKAAMCFHWKTLRRQVRVRGAVEKVSDAEADAYYASRPRGSRIGAWASKQSRPLESRFALEKAVAEYTAKYAIGDIPRPSYWSGFRIRPVSIEFWHDRAFRLHDRVLFTRPAPEGDWNKERLYP.

FMN-binding positions include 50–55 (RMVLLK), 65–66 (YT), Lys-72, and Gln-94. Lys-55 contacts substrate. 3 residues coordinate substrate: Tyr-112, Arg-116, and Ser-120. FMN is bound by residues 129–130 (QS) and Trp-174. Residue 180–182 (RLH) participates in substrate binding. Arg-184 lines the FMN pocket.

The protein belongs to the pyridoxamine 5'-phosphate oxidase family. Homodimer. FMN is required as a cofactor.

The enzyme catalyses pyridoxamine 5'-phosphate + O2 + H2O = pyridoxal 5'-phosphate + H2O2 + NH4(+). The catalysed reaction is pyridoxine 5'-phosphate + O2 = pyridoxal 5'-phosphate + H2O2. Its pathway is cofactor metabolism; pyridoxal 5'-phosphate salvage; pyridoxal 5'-phosphate from pyridoxamine 5'-phosphate: step 1/1. It participates in cofactor metabolism; pyridoxal 5'-phosphate salvage; pyridoxal 5'-phosphate from pyridoxine 5'-phosphate: step 1/1. Its function is as follows. Catalyzes the oxidation of either pyridoxine 5'-phosphate (PNP) or pyridoxamine 5'-phosphate (PMP) into pyridoxal 5'-phosphate (PLP). The protein is Pyridoxine/pyridoxamine 5'-phosphate oxidase of Brucella anthropi (strain ATCC 49188 / DSM 6882 / CCUG 24695 / JCM 21032 / LMG 3331 / NBRC 15819 / NCTC 12168 / Alc 37) (Ochrobactrum anthropi).